Reading from the N-terminus, the 474-residue chain is Poly(A) polymerase catalytic subunit (474 aa).

Residues Asp193 and Asp195 contribute to the active site.

This sequence belongs to the poxviridae poly(A) polymerase catalytic subunit family. In terms of assembly, heterodimer of a large (catalytic) subunit and a small (regulatory) subunit.

The enzyme catalyses RNA(n) + ATP = RNA(n)-3'-adenine ribonucleotide + diphosphate. Functionally, polymerase that creates the 3'-poly(A) tail of mRNA's. In Bos taurus (Bovine), this protein is Poly(A) polymerase catalytic subunit (PAPL).